The sequence spans 236 residues: C-&gt;U-editing enzyme APOBEC-1 (236 aa).

Residues 10–134 enclose the CMP/dCMP-type deaminase domain; it reads KDYTLRRRIE…RRNRQGLKDL (125 aa). Residue His61 participates in Zn(2+) binding. The active-site Proton donor is Glu63. Zn(2+) contacts are provided by Cys93 and Cys96.

Belongs to the cytidine and deoxycytidylate deaminase family. Homodimer. Interacts with A1CF; form an mRNA editing complex. Interacts with RBM47; form an mRNA editing complex. Found in a complex with CELF2/CUGBP2 and A1CF. Interacts with HNRPAB. Interacts with SYNCRIP. Zn(2+) serves as cofactor. Expressed exclusively in the intestine.

It is found in the cytoplasm. The protein localises to the nucleus. The catalysed reaction is a cytidine in mRNA + H2O + H(+) = a uridine in mRNA + NH4(+). It catalyses the reaction cytidine(6666) in apoB mRNA + H2O + H(+) = uridine(6666) in apoB mRNA + NH4(+). Cytidine deaminase catalyzing the cytidine to uridine postranscriptional editing of a variety of mRNAs. Form complexes with cofactors that confer differential editing activity and selectivity. Responsible for the postranscriptional editing of a CAA codon for Gln to a UAA codon for stop in the apolipoprotein B mRNA. Also involved in CGA (Arg) to UGA (Stop) editing in the NF1 mRNA. May also play a role in the epigenetic regulation of gene expression by participating in DNA demethylation. In Oryctolagus cuniculus (Rabbit), this protein is C-&gt;U-editing enzyme APOBEC-1.